The sequence spans 325 residues: MKNPKMTVIGGGTGISIILKSLRNEAVDITAVVTVADDGGSSGELRNAMQLAPPGDLRNVLLAMSDMPKFYERVFQYRFNESDGALAGHPLGNLIIAGISEMQGSTYNAIQILTKFFHITGKIYPSSEQALTLHAVFKDGHEVAGESSIAKYQGMIDHVYVTNTYNDQKPQASRKVVEAILESDMIVLGPGSLFTSILPNLVIPEIKEALRQTKAEVVYICNIMTQYGETEQFSDADHVAVLNQHLGRDLIDTVLVNVAKVPQAYMNSNKFDEYLVQVDHDFAGLCRAAKRVISSYFLRLENGGAFHDGNLVVEELMNLVRIVKQ.

It belongs to the gluconeogenesis factor family.

Its subcellular location is the cytoplasm. Functionally, required for morphogenesis under gluconeogenic growth conditions. This Streptococcus pyogenes serotype M3 (strain ATCC BAA-595 / MGAS315) protein is Putative gluconeogenesis factor.